Consider the following 342-residue polypeptide: Glycerol-1-phosphate dehydrogenase [NAD(P)+] (342 aa).

NAD(+) contacts are provided by residues 84 to 88 and 106 to 109; these read GRPLD and TSAS. A substrate-binding site is contributed by Asp-111. Position 115 (Ser-115) interacts with NAD(+). Asp-160 is a substrate binding site. Zn(2+)-binding residues include Asp-160 and His-241. His-245 contributes to the substrate binding site. His-260 contributes to the Zn(2+) binding site.

This sequence belongs to the glycerol-1-phosphate dehydrogenase family. Homodimer. Requires Zn(2+) as cofactor.

The protein localises to the cytoplasm. It carries out the reaction sn-glycerol 1-phosphate + NAD(+) = dihydroxyacetone phosphate + NADH + H(+). The catalysed reaction is sn-glycerol 1-phosphate + NADP(+) = dihydroxyacetone phosphate + NADPH + H(+). It functions in the pathway membrane lipid metabolism; glycerophospholipid metabolism. In terms of biological role, catalyzes the NAD(P)H-dependent reduction of dihydroxyacetonephosphate (DHAP or glycerone phosphate) to glycerol 1-phosphate (G1P). The G1P thus generated is used as the glycerophosphate backbone of phospholipids in the cellular membranes of Archaea. This is Glycerol-1-phosphate dehydrogenase [NAD(P)+] from Pyrobaculum neutrophilum (strain DSM 2338 / JCM 9278 / NBRC 100436 / V24Sta) (Thermoproteus neutrophilus).